The primary structure comprises 240 residues: Ribonuclease HII (240 aa).

The 200-residue stretch at 27–226 (GPVAGVDEAG…REARSLRLED (200 aa)) folds into the RNase H type-2 domain. 3 residues coordinate a divalent metal cation: Asp-33, Glu-34, and Asp-127.

It belongs to the RNase HII family. Mn(2+) is required as a cofactor. Requires Mg(2+) as cofactor.

The protein localises to the cytoplasm. The catalysed reaction is Endonucleolytic cleavage to 5'-phosphomonoester.. Endonuclease that specifically degrades the RNA of RNA-DNA hybrids. The sequence is that of Ribonuclease HII from Frankia casuarinae (strain DSM 45818 / CECT 9043 / HFP020203 / CcI3).